The sequence spans 222 residues: Small ribosomal subunit protein eS1 (222 aa).

Belongs to the eukaryotic ribosomal protein eS1 family.

The polypeptide is Small ribosomal subunit protein eS1 (Pyrobaculum calidifontis (strain DSM 21063 / JCM 11548 / VA1)).